The chain runs to 360 residues: 3-isopropylmalate dehydrogenase (360 aa).

76-89 lines the NAD(+) pocket; that stretch reads GPKWDTIERDIRPE. Positions 96, 106, 134, and 224 each coordinate substrate. The Mg(2+) site is built by Asp-224, Asp-248, and Asp-252. NAD(+) is bound at residue 282–294; sequence GSAPDIAGKGIAN.

It belongs to the isocitrate and isopropylmalate dehydrogenases family. LeuB type 1 subfamily. As to quaternary structure, homodimer. The cofactor is Mg(2+). Mn(2+) serves as cofactor.

The protein localises to the cytoplasm. The enzyme catalyses (2R,3S)-3-isopropylmalate + NAD(+) = 4-methyl-2-oxopentanoate + CO2 + NADH. It participates in amino-acid biosynthesis; L-leucine biosynthesis; L-leucine from 3-methyl-2-oxobutanoate: step 3/4. In terms of biological role, catalyzes the oxidation of 3-carboxy-2-hydroxy-4-methylpentanoate (3-isopropylmalate) to 3-carboxy-4-methyl-2-oxopentanoate. The product decarboxylates to 4-methyl-2 oxopentanoate. In Pseudomonas fluorescens (strain Pf0-1), this protein is 3-isopropylmalate dehydrogenase.